Here is a 145-residue protein sequence, read N- to C-terminus: I-leader protein (145 aa).

Its subcellular location is the host cytoplasm. The protein resides in the host perinuclear region. The protein is I-leader protein of Human adenovirus C serotype 2 (HAdV-2).